We begin with the raw amino-acid sequence, 468 residues long: UDP-N-acetylmuramate--L-alanine ligase (468 aa).

114-120 (GTHGKTT) contacts ATP.

It belongs to the MurCDEF family.

The protein localises to the cytoplasm. It catalyses the reaction UDP-N-acetyl-alpha-D-muramate + L-alanine + ATP = UDP-N-acetyl-alpha-D-muramoyl-L-alanine + ADP + phosphate + H(+). The protein operates within cell wall biogenesis; peptidoglycan biosynthesis. Cell wall formation. This chain is UDP-N-acetylmuramate--L-alanine ligase, found in Methylocella silvestris (strain DSM 15510 / CIP 108128 / LMG 27833 / NCIMB 13906 / BL2).